A 1523-amino-acid chain; its full sequence is WD repeat-containing protein 62 (1523 aa).

An N-acetylalanine modification is found at alanine 2. Serine 33 is subject to Phosphoserine. A Phosphothreonine modification is found at threonine 46. 12 WD repeats span residues 109–150 (TTRK…QVAE), 153–194 (GHKY…VVAS), 196–234 (KVSCRVIALSFSEDSSYFVTVGNRHVRFWFLEASTEAKV), 291–330 (INLKVSLSSCLCVSDELIFCGCTDGIVRIFQAHSLLYLTN), 357–396 (AVYPDTVALTFDPVHQWLSCVYKDHSIYIWDVKDIDEVSK), 411–450 (EVYPEFEDQRACLPSGTFLTCSSDNTIRFWNLDSASDTRW), 490–529 (DMKAGVRVMQVSPDGQHLASGDRSGNLRIHELHFMDELIK), 532–574 (AHDA…NLEQ), 578–618 (DHSS…DGLH), 626–665 (AEKTTLYDMDIDITQKYVAVACQDRNVRVYNTVSGKQKKC), 671–713 (GDEG…KMFG), and 714–752 (HSEIVTGMKFTYDCRHLITVSGDSCVFIWHLGPEITTCM). Serine 501 is modified (phosphoserine). A disordered region spans residues 762–824 (QEQQQQPKDQ…PSKDSLDPDP (63 aa)). Over residues 776–790 (PPSQETYASTPSEIR) the composition is skewed to polar residues. The segment covering 797-809 (QTEDEMEEECEPE) has biased composition (acidic residues). The WD 13 repeat unit spans residues 803-846 (EEECEPEELLKTPSKDSLDPDPRCLLTNGKLPLWAKRLLGDDDV). A compositionally biased stretch (basic and acidic residues) spans 810–824 (ELLKTPSKDSLDPDP). Phosphoserine is present on residues serine 966 and serine 972. The disordered stretch occupies residues 1000 to 1072 (VSSVSSKDQS…GLGNGSLPQT (73 aa)). Threonine 1072 is modified (phosphothreonine). Residues serine 1117, serine 1143, and serine 1169 each carry the phosphoserine modification. The segment at 1143–1258 (SPEAQPVGQG…SLHKPLSPGQ (116 aa)) is disordered. 2 stretches are compositionally biased toward polar residues: residues 1167 to 1177 (YMSSDGTNVLS) and 1199 to 1213 (TSVLTTGREQSISAP). The span at 1214–1225 (SSCSYLESTTSS) shows a compositional bias: low complexity. The span at 1226 to 1235 (HAKTTRSISL) shows a compositional bias: polar residues. Position 1234 is a phosphoserine (serine 1234).

In terms of assembly, can form homodimers (via C-terminus). Interacts (via C-terminus) with MAPKBP1 (via C-terminus). Interacts with CDK5RAP2, CEP152, CEP63 and KIAA0753. CEP63, CDK5RAP2, CEP152, WDR62 are proposed to form a stepwise assembled complex at the centrosome forming a ring near parental centrioles. As to expression, prominent in neural crest lineages from 9.5 dpc to 11.5 dpc. Also expressed in the ventricular and subventricular zones during the period of cerebral cortical neurogenesis (11.5-16.5 dpc), with expression decreasing in intensity by 17.5 dpc. In the cerebellum, it is strongly expressed in precursors of granule neurons at late embryonic and early postnatal stages; by postnatal day 9 (P9). Present in fetal brain, enriched within the ventricular and subventricular zone (at protein level).

The protein localises to the nucleus. It localises to the cytoplasm. The protein resides in the cytoskeleton. Its subcellular location is the spindle pole. It is found in the microtubule organizing center. The protein localises to the centrosome. It localises to the centriole. Its function is as follows. Required for cerebral cortical development. Plays a role in neuronal proliferation and migration. Plays a role in mother-centriole-dependent centriole duplication; the function seems also to involve CEP152, CDK5RAP2 and CEP63 through a stepwise assembled complex at the centrosome that recruits CDK2 required for centriole duplication. The protein is WD repeat-containing protein 62 (Wdr62) of Mus musculus (Mouse).